Consider the following 266-residue polypeptide: MKKRTREQTGLIPRSILRTFERFRKQLLPGAEMLVIQEFRISRYQVIVSVRCLITLIFVPLFINILSKSFLIRPGIEYLWNQNHNEIFLNSYQENRALHDLHQFEEKVYFDSFVTDFAPSSNVLLQKQSVEIAKNYNLESIEAISNLFADFLSFLSLSVVFLLLKPQIIILKAFLSESLYSLSDTTKSFLLILGTDLLVGFHSPRGWEVFLEWLLRHFGLPENSDFMSLFVATFPVFLDTVFKYWIFRSLNKISPSTVATYHNIIE.

3 consecutive transmembrane segments (helical) span residues Val46 to Leu66, Phe151 to Leu171, and Phe226 to Ile246.

This sequence belongs to the CemA family.

It localises to the plastid. It is found in the chloroplast inner membrane. It carries out the reaction K(+)(in) + H(+)(out) = K(+)(out) + H(+)(in). Functionally, contributes to K(+)/H(+) antiport activity by supporting proton efflux to control proton extrusion and homeostasis in chloroplasts in a light-dependent manner to modulate photosynthesis. Prevents excessive induction of non-photochemical quenching (NPQ) under continuous-light conditions. Indirectly promotes efficient inorganic carbon uptake into chloroplasts. This chain is Potassium/proton antiporter CemA, found in Chlorella vulgaris (Green alga).